The sequence spans 415 residues: Serine hydroxymethyltransferase 3 (415 aa).

(6S)-5,6,7,8-tetrahydrofolate contacts are provided by residues Leu122 and 126–128 (GHL). Residue Lys230 is modified to N6-(pyridoxal phosphate)lysine.

This sequence belongs to the SHMT family. In terms of assembly, homodimer. It depends on pyridoxal 5'-phosphate as a cofactor.

The protein resides in the cytoplasm. It carries out the reaction (6R)-5,10-methylene-5,6,7,8-tetrahydrofolate + glycine + H2O = (6S)-5,6,7,8-tetrahydrofolate + L-serine. Its pathway is one-carbon metabolism; tetrahydrofolate interconversion. The protein operates within amino-acid biosynthesis; glycine biosynthesis; glycine from L-serine: step 1/1. Its function is as follows. Catalyzes the reversible interconversion of serine and glycine with tetrahydrofolate (THF) serving as the one-carbon carrier. This reaction serves as the major source of one-carbon groups required for the biosynthesis of purines, thymidylate, methionine, and other important biomolecules. Also exhibits THF-independent aldolase activity toward beta-hydroxyamino acids, producing glycine and aldehydes, via a retro-aldol mechanism. This Burkholderia lata (strain ATCC 17760 / DSM 23089 / LMG 22485 / NCIMB 9086 / R18194 / 383) protein is Serine hydroxymethyltransferase 3.